A 177-amino-acid chain; its full sequence is Transcriptional repressor NrdR (177 aa).

A zinc finger spans residues 3–34; the sequence is CPYCGGSETQVKDSRPSEDGAAIRRRRVCPDC. The ATP-cone domain maps to 49-139; it reads VVVLKRSGKR…VYKNFREARD (91 aa). The interval 148–177 is disordered; it reads SDGMPVPAAAPEAEGDPEPEASGRRRAGRP.

This sequence belongs to the NrdR family. Zn(2+) serves as cofactor.

In terms of biological role, negatively regulates transcription of bacterial ribonucleotide reductase nrd genes and operons by binding to NrdR-boxes. In Methylobacterium radiotolerans (strain ATCC 27329 / DSM 1819 / JCM 2831 / NBRC 15690 / NCIMB 10815 / 0-1), this protein is Transcriptional repressor NrdR.